A 276-amino-acid polypeptide reads, in one-letter code: Digeranylgeranylglyceryl phosphate synthase (276 aa).

The next 5 helical transmembrane spans lie at 14 to 34, 90 to 110, 144 to 164, 200 to 220, and 221 to 241; these read VNTL…GGAV, VVLF…AVCI, FVFG…AALA, ALAV…VPYL, and VGVF…VMVV.

The protein belongs to the UbiA prenyltransferase family. DGGGP synthase subfamily. Requires Mg(2+) as cofactor.

It is found in the cell membrane. It carries out the reaction sn-3-O-(geranylgeranyl)glycerol 1-phosphate + (2E,6E,10E)-geranylgeranyl diphosphate = 2,3-bis-O-(geranylgeranyl)-sn-glycerol 1-phosphate + diphosphate. The protein operates within membrane lipid metabolism; glycerophospholipid metabolism. Prenyltransferase that catalyzes the transfer of the geranylgeranyl moiety of geranylgeranyl diphosphate (GGPP) to the C2 hydroxyl of (S)-3-O-geranylgeranylglyceryl phosphate (GGGP). This reaction is the second ether-bond-formation step in the biosynthesis of archaeal membrane lipids. This Halobacterium salinarum (strain ATCC 29341 / DSM 671 / R1) protein is Digeranylgeranylglyceryl phosphate synthase.